The primary structure comprises 142 residues: Putative pre-16S rRNA nuclease (142 aa).

It belongs to the YqgF nuclease family.

It localises to the cytoplasm. In terms of biological role, could be a nuclease involved in processing of the 5'-end of pre-16S rRNA. In Azotobacter vinelandii (strain DJ / ATCC BAA-1303), this protein is Putative pre-16S rRNA nuclease.